The sequence spans 347 residues: Violet-sensitive opsin (347 aa).

Residues 1-31 (MLEEEDFYLFKNVSNVSPFDGPQYHIAPKWA) are Extracellular-facing. Asn-12 carries N-linked (GlcNAc...) asparagine glycosylation. The chain crosses the membrane as a helical span at residues 32 to 56 (FTLQAIFMGMVFLIGTPLNFIVLLV). At 57-68 (TIKYKKLRQPLN) the chain is on the cytoplasmic side. The helical transmembrane segment at 69-94 (YILVNITVGGFLMCIFSIFPVFVSSS) threads the bilayer. Residues 95-108 (QGYFFFGRIACSID) are Extracellular-facing. Cys-105 and Cys-182 are joined by a disulfide. Residues 109 to 128 (AFVGTLTGLVTGWSLAFLAF) form a helical membrane-spanning segment. Residues 129–147 (ERYIVICKPMGNFNFSSSH) are Cytoplasmic-facing. Residues 148 to 171 (ALAVVICTWIIGIVVSVPPFLGWS) form a helical membrane-spanning segment. The Extracellular segment spans residues 172–197 (RYMPEGLQCSCGPDWYTVGTKYRSEY). Residues 198-225 (YTWFIFIFCFVIPLSLICFSYGRLLGAL) form a helical membrane-spanning segment. The Cytoplasmic segment spans residues 226–247 (RAVAAQQQESASTQKAEREVSR). Residues 248-271 (MVIFMVGSFCLCYVPYAAMAMYMV) traverse the membrane as a helical segment. Residues 272 to 279 (TNRNHGLD) lie on the Extracellular side of the membrane. Residues 280-304 (LRLVTIPAFFSKSSCVYNPIIYSFM) form a helical membrane-spanning segment. Lys-291 carries the N6-(retinylidene)lysine modification. Residues 305–347 (NKQFRGCIMETVCGRPMSDDSSVSSTSQRTEVSTVSSSQVSPA) are Cytoplasmic-facing. Residues 323-347 (DDSSVSSTSQRTEVSTVSSSQVSPA) form a disordered region.

This sequence belongs to the G-protein coupled receptor 1 family. Opsin subfamily. Phosphorylated on some or all of the serine and threonine residues present in the C-terminal region. In terms of tissue distribution, the color pigments are found in the cone photoreceptor cells.

It localises to the membrane. Functionally, visual pigments are the light-absorbing molecules that mediate vision. They consist of an apoprotein, opsin, covalently linked to cis-retinal. In Xenopus laevis (African clawed frog), this protein is Violet-sensitive opsin.